The sequence spans 205 residues: StAR-related lipid transfer protein 4 (205 aa).

Residues 1-205 (MEGLSDVASF…NFYGDLRKAL (205 aa)) enclose the START domain.

The catalysed reaction is cholesterol(in) = cholesterol(out). In terms of biological role, involved in the intracellular transport of cholesterol. Binds cholesterol or other sterols. The polypeptide is StAR-related lipid transfer protein 4 (STARD4) (Homo sapiens (Human)).